The sequence spans 96 residues: uncharacterized protein (96 aa).

Transmembrane regions (helical) follow at residues 14 to 34, 38 to 58, and 67 to 87; these read FIEG…KYWA, LAVT…LLVL, and WPLK…GNFL.

Its subcellular location is the cell membrane. This is an uncharacterized protein from Bacillus subtilis (strain 168).